We begin with the raw amino-acid sequence, 87 residues long: Small ribosomal subunit protein uS17 (87 aa).

This sequence belongs to the universal ribosomal protein uS17 family. As to quaternary structure, part of the 30S ribosomal subunit.

In terms of biological role, one of the primary rRNA binding proteins, it binds specifically to the 5'-end of 16S ribosomal RNA. This Bacillus cereus (strain ATCC 14579 / DSM 31 / CCUG 7414 / JCM 2152 / NBRC 15305 / NCIMB 9373 / NCTC 2599 / NRRL B-3711) protein is Small ribosomal subunit protein uS17.